Reading from the N-terminus, the 249-residue chain is Ribonuclease 3 (249 aa).

One can recognise an RNase III domain in the interval 20-149 (FKEFQERISV…FIGALYLDQG (130 aa)). Glu-62 is a Mg(2+) binding site. Asp-66 is a catalytic residue. Residues Asp-135 and Glu-138 each contribute to the Mg(2+) site. Glu-138 is an active-site residue. A DRBM domain is found at 175 to 244 (DFKSQLQEFV…AQEALAKMQK (70 aa)). Residues 223–249 (NGRSKKEAEQHAAQEALAKMQKHHTKQ) are disordered.

This sequence belongs to the ribonuclease III family. Homodimer. Mg(2+) is required as a cofactor.

It localises to the cytoplasm. The enzyme catalyses Endonucleolytic cleavage to 5'-phosphomonoester.. In terms of biological role, digests double-stranded RNA. Involved in the processing of primary rRNA transcript to yield the immediate precursors to the large and small rRNAs (23S and 16S). Processes some mRNAs, and tRNAs when they are encoded in the rRNA operon. Processes pre-crRNA and tracrRNA of type II CRISPR loci if present in the organism. The sequence is that of Ribonuclease 3 from Bacillus velezensis (strain DSM 23117 / BGSC 10A6 / LMG 26770 / FZB42) (Bacillus amyloliquefaciens subsp. plantarum).